Reading from the N-terminus, the 205-residue chain is Small ribosomal subunit protein uS4 (205 aa).

Basic and acidic residues predominate over residues 1–16 (MSKRESSKYKIDRRMG). The tract at residues 1 to 46 (MSKRESSKYKIDRRMGENIWGRPKSPVNRREYGPGQHGQRRKGKLS) is disordered. An S4 RNA-binding domain is found at 94–157 (SRLDAIVYRA…KQLVTVLEAV (64 aa)).

The protein belongs to the universal ribosomal protein uS4 family. Part of the 30S ribosomal subunit. Contacts protein S5. The interaction surface between S4 and S5 is involved in control of translational fidelity.

One of the primary rRNA binding proteins, it binds directly to 16S rRNA where it nucleates assembly of the body of the 30S subunit. Its function is as follows. With S5 and S12 plays an important role in translational accuracy. This is Small ribosomal subunit protein uS4 from Rhizobium etli (strain CIAT 652).